The chain runs to 395 residues: Acetate kinase (395 aa).

Residue Asn7 coordinates Mg(2+). Lys14 contributes to the ATP binding site. Arg90 serves as a coordination point for substrate. Residue Asp147 is the Proton donor/acceptor of the active site. Residues 207-211, 282-284, and 330-334 contribute to the ATP site; these read HLGNG, DFR, and GLGEN. Glu383 serves as a coordination point for Mg(2+).

This sequence belongs to the acetokinase family. In terms of assembly, homodimer. Mg(2+) is required as a cofactor. Mn(2+) serves as cofactor.

It is found in the cytoplasm. It catalyses the reaction acetate + ATP = acetyl phosphate + ADP. Its pathway is metabolic intermediate biosynthesis; acetyl-CoA biosynthesis; acetyl-CoA from acetate: step 1/2. Its function is as follows. Catalyzes the formation of acetyl phosphate from acetate and ATP. Can also catalyze the reverse reaction. The sequence is that of Acetate kinase from Lachnoclostridium phytofermentans (strain ATCC 700394 / DSM 18823 / ISDg) (Clostridium phytofermentans).